The chain runs to 84 residues: Cell division topological specificity factor (84 aa).

This sequence belongs to the MinE family.

In terms of biological role, prevents the cell division inhibition by proteins MinC and MinD at internal division sites while permitting inhibition at polar sites. This ensures cell division at the proper site by restricting the formation of a division septum at the midpoint of the long axis of the cell. This is Cell division topological specificity factor from Granulibacter bethesdensis (strain ATCC BAA-1260 / CGDNIH1).